Here is a 430-residue protein sequence, read N- to C-terminus: Tol-Pal system protein TolB (430 aa).

The N-terminal stretch at 1–21 (MKQAFRVALSVLMLFVAVAHA) is a signal peptide.

This sequence belongs to the TolB family. As to quaternary structure, the Tol-Pal system is composed of five core proteins: the inner membrane proteins TolA, TolQ and TolR, the periplasmic protein TolB and the outer membrane protein Pal. They form a network linking the inner and outer membranes and the peptidoglycan layer.

The protein localises to the periplasm. Part of the Tol-Pal system, which plays a role in outer membrane invagination during cell division and is important for maintaining outer membrane integrity. TolB occupies a key intermediary position in the Tol-Pal system because it communicates directly with both membrane-embedded components, Pal in the outer membrane and TolA in the inner membrane. The sequence is that of Tol-Pal system protein TolB from Erwinia tasmaniensis (strain DSM 17950 / CFBP 7177 / CIP 109463 / NCPPB 4357 / Et1/99).